The chain runs to 174 residues: Peptide deformylase (174 aa).

The Fe cation site is built by Cys94 and His136. Glu137 is a catalytic residue. His140 is a Fe cation binding site.

The protein belongs to the polypeptide deformylase family. Fe(2+) is required as a cofactor.

The enzyme catalyses N-terminal N-formyl-L-methionyl-[peptide] + H2O = N-terminal L-methionyl-[peptide] + formate. Removes the formyl group from the N-terminal Met of newly synthesized proteins. Requires at least a dipeptide for an efficient rate of reaction. N-terminal L-methionine is a prerequisite for activity but the enzyme has broad specificity at other positions. The protein is Peptide deformylase of Rhizobium meliloti (strain 1021) (Ensifer meliloti).